We begin with the raw amino-acid sequence, 27 residues long: DELTA-pseudomyrmecitoxin-Pp1a subunit A (27 aa).

In terms of assembly, heterodimer composed of subunit A and subunit B (DELTA-PSDTX-Pp1a); disulfide-linked. In terms of tissue distribution, expressed by the venom gland.

The protein localises to the secreted. This heterodimer has insecticidal and cytotoxic properties. Induces immediate paralysis when injected into blowflies (Lucilia cuprina), and then death within 24 hours. Also inhibits the growth of Aedes albopictus mosquito C6/36 cells. This chain is DELTA-pseudomyrmecitoxin-Pp1a subunit A, found in Pseudomyrmex penetrator (Ant).